Here is a 537-residue protein sequence, read N- to C-terminus: O-phosphoserine--tRNA(Cys) ligase (537 aa).

Residues 186–188 (HMT), 231–233 (SAS), 273–274 (YY), and N317 contribute to the substrate site.

Belongs to the class-II aminoacyl-tRNA synthetase family. O-phosphoseryl-tRNA(Cys) synthetase subfamily. Homotetramer. Interacts with SepCysS.

The enzyme catalyses tRNA(Cys) + O-phospho-L-serine + ATP = O-phospho-L-seryl-tRNA(Cys) + AMP + diphosphate. In terms of biological role, catalyzes the attachment of O-phosphoserine (Sep) to tRNA(Cys). This chain is O-phosphoserine--tRNA(Cys) ligase, found in Methanococcus maripaludis (strain C6 / ATCC BAA-1332).